The sequence spans 212 residues: Adenylate kinase (212 aa).

10–15 (GAGKGT) provides a ligand contact to ATP. The NMP stretch occupies residues 30–59 (AIGDIFRTIIKTSTSEAELINNYVRQGELI). Residues Arg-36, 57 to 59 (ELI), 85 to 88 (GYPR), and Gln-92 contribute to the AMP site. The segment at 122–160 (GRYSCKNCGKIYNRYFLQPKTDNVCDVCGSSTFDYRKDD) is LID. Arg-123 provides a ligand contact to ATP. Zn(2+) contacts are provided by Cys-126 and Cys-129. 132-133 (IY) is an ATP binding site. Zn(2+)-binding residues include Cys-146 and Cys-149. The AMP site is built by Arg-157 and Arg-168. An ATP-binding site is contributed by Lys-196.

It belongs to the adenylate kinase family. Monomer.

The protein localises to the cytoplasm. It catalyses the reaction AMP + ATP = 2 ADP. The protein operates within purine metabolism; AMP biosynthesis via salvage pathway; AMP from ADP: step 1/1. In terms of biological role, catalyzes the reversible transfer of the terminal phosphate group between ATP and AMP. Plays an important role in cellular energy homeostasis and in adenine nucleotide metabolism. The polypeptide is Adenylate kinase (Rickettsia rickettsii (strain Iowa)).